A 425-amino-acid polypeptide reads, in one-letter code: 5-methylthioadenosine/S-adenosylhomocysteine deaminase (425 aa).

Zn(2+)-binding residues include His63 and His65. 2 residues coordinate substrate: Glu92 and His184. Position 211 (His211) interacts with Zn(2+). Positions 214 and 299 each coordinate substrate. Residue Asp299 coordinates Zn(2+).

The protein belongs to the metallo-dependent hydrolases superfamily. MTA/SAH deaminase family. Requires Zn(2+) as cofactor.

It catalyses the reaction S-adenosyl-L-homocysteine + H2O + H(+) = S-inosyl-L-homocysteine + NH4(+). The enzyme catalyses S-methyl-5'-thioadenosine + H2O + H(+) = S-methyl-5'-thioinosine + NH4(+). In terms of biological role, catalyzes the deamination of 5-methylthioadenosine and S-adenosyl-L-homocysteine into 5-methylthioinosine and S-inosyl-L-homocysteine, respectively. Is also able to deaminate adenosine. The sequence is that of 5-methylthioadenosine/S-adenosylhomocysteine deaminase from Pyrococcus abyssi (strain GE5 / Orsay).